A 774-amino-acid chain; its full sequence is Ras and Rab interactor 1 (774 aa).

N-acetylmethionine is present on Met1. The interval 1–52 is disordered; that stretch reads MEDPGETEAHPLGATSLNFVPGYQQEEKPSPDPLYDTPDARGVQAGGSQQPA. Residue Ser16 is modified to Phosphoserine. Tyr35 is subject to Phosphotyrosine; by ABL1 and ABL2. The SH2 domain maps to 68–162; it reads WLQLRANAAA…ILLLPLPLPR (95 aa). 2 disordered regions span residues 188–211 and 249–342; these read LNTKNQQRPSEAPQIPRLKARSPQ and STET…RPRH. A phosphoserine mark is found at Ser209, Ser257, Ser330, and Ser334. A compositionally biased stretch (pro residues) spans 256 to 268; sequence LSPPAVPPPPVPV. Over residues 327–337 the composition is skewed to low complexity; that stretch reads SSGSPTTSPRL. A Phosphoserine; by PKD/PRKD1 modification is found at Ser351. Residues 456–598 enclose the VPS9 domain; sequence LSTDGSLGRL…LSGLSQAHAL (143 aa). Ser609 carries the post-translational modification Phosphoserine. Residues 624–706 form the Ras-associating domain; the sequence is FQHLLRVAYQ…GYLIYRRAER (83 aa). The residue at position 692 (Arg692) is an Omega-N-methylarginine. Over residues 704-766 the composition is skewed to basic and acidic residues; sequence AERPETQRAA…GHMQLEEQKA (63 aa). The tract at residues 704-774 is disordered; the sequence is AERPETQRAA…KAEGCPALEE (71 aa).

It belongs to the RIN (Ras interaction/interference) family. As to quaternary structure, interacts with the GTP-bound form of Ras proteins (NRAS, HRAS and KRAS). This interaction prevents the association between RAF1 and Ras. Interacts with 14-3-3 proteins YWHAB, YWHAE and YWHAZ when phosphorylated on Ser-351. Interacts with the SH3 domain of ABL1 and ABL2. Interacts with RAB5A. The interaction with Ras is probably regulated and antagonized by the interaction with 14-3-3 proteins. The interaction with 14-3-3 proteins is regulated by phosphorylation on Ser-351. In terms of processing, phosphorylated on tyrosine residues by ABL1 and ABL2. Phosphorylation at Ser-351 by PRKD1 induces interaction with 14-3-3 proteins.

It localises to the cytoplasm. The protein localises to the membrane. It is found in the cytoskeleton. Ras effector protein, which may serve as an inhibitory modulator of neuronal plasticity in aversive memory formation. Can affect Ras signaling at different levels. First, by competing with RAF1 protein for binding to activated Ras. Second, by enhancing signaling from ABL1 and ABL2, which regulate cytoskeletal remodeling. Third, by activating RAB5A, possibly by functioning as a guanine nucleotide exchange factor (GEF) for RAB5A, by exchanging bound GDP for free GTP, and facilitating Ras-activated receptor endocytosis. The polypeptide is Ras and Rab interactor 1 (Rin1) (Rattus norvegicus (Rat)).